Reading from the N-terminus, the 644-residue chain is DNA mismatch repair protein MutL (644 aa).

Residues 336–400 form a disordered region; that stretch reads ERPFEPSSPQ…EISRDSSLGE (65 aa). Over residues 373-400 the composition is skewed to basic and acidic residues; it reads SKTHSTWDEASRVDTSRAEISRDSSLGE.

It belongs to the DNA mismatch repair MutL/HexB family.

In terms of biological role, this protein is involved in the repair of mismatches in DNA. It is required for dam-dependent methyl-directed DNA mismatch repair. May act as a 'molecular matchmaker', a protein that promotes the formation of a stable complex between two or more DNA-binding proteins in an ATP-dependent manner without itself being part of a final effector complex. This Shewanella sp. (strain MR-7) protein is DNA mismatch repair protein MutL.